The sequence spans 238 residues: Probable transcriptional regulatory protein SpyM51586 (238 aa).

Belongs to the TACO1 family. YeeN subfamily.

It localises to the cytoplasm. This Streptococcus pyogenes serotype M5 (strain Manfredo) protein is Probable transcriptional regulatory protein SpyM51586.